Consider the following 259-residue polypeptide: ATP synthase subunit b 2 (259 aa).

Residues 5–27 traverse the membrane as a helical segment; it reads WFTVSAQAINFLILVALLKRFLY.

The protein belongs to the ATPase B chain family. As to quaternary structure, F-type ATPases have 2 components, F(1) - the catalytic core - and F(0) - the membrane proton channel. F(1) has five subunits: alpha(3), beta(3), gamma(1), delta(1), epsilon(1). F(0) has three main subunits: a(1), b(2) and c(10-14). The alpha and beta chains form an alternating ring which encloses part of the gamma chain. F(1) is attached to F(0) by a central stalk formed by the gamma and epsilon chains, while a peripheral stalk is formed by the delta and b chains.

The protein resides in the cell inner membrane. In terms of biological role, f(1)F(0) ATP synthase produces ATP from ADP in the presence of a proton or sodium gradient. F-type ATPases consist of two structural domains, F(1) containing the extramembraneous catalytic core and F(0) containing the membrane proton channel, linked together by a central stalk and a peripheral stalk. During catalysis, ATP synthesis in the catalytic domain of F(1) is coupled via a rotary mechanism of the central stalk subunits to proton translocation. Component of the F(0) channel, it forms part of the peripheral stalk, linking F(1) to F(0). The sequence is that of ATP synthase subunit b 2 from Syntrophotalea carbinolica (strain DSM 2380 / NBRC 103641 / GraBd1) (Pelobacter carbinolicus).